Here is a 460-residue protein sequence, read N- to C-terminus: V-type ATP synthase beta chain (460 aa).

Belongs to the ATPase alpha/beta chains family.

Produces ATP from ADP in the presence of a proton gradient across the membrane. The V-type beta chain is a regulatory subunit. This chain is V-type ATP synthase beta chain, found in Clostridium novyi (strain NT).